The primary structure comprises 405 residues: Nicotinate phosphoribosyltransferase (405 aa).

H230 is subject to Phosphohistidine; by autocatalysis.

The protein belongs to the NAPRTase family. In terms of processing, transiently phosphorylated on a His residue during the reaction cycle. Phosphorylation strongly increases the affinity for substrates and increases the rate of nicotinate D-ribonucleotide production. Dephosphorylation regenerates the low-affinity form of the enzyme, leading to product release.

It carries out the reaction nicotinate + 5-phospho-alpha-D-ribose 1-diphosphate + ATP + H2O = nicotinate beta-D-ribonucleotide + ADP + phosphate + diphosphate. The protein operates within cofactor biosynthesis; NAD(+) biosynthesis; nicotinate D-ribonucleotide from nicotinate: step 1/1. Catalyzes the synthesis of beta-nicotinate D-ribonucleotide from nicotinate and 5-phospho-D-ribose 1-phosphate at the expense of ATP. The sequence is that of Nicotinate phosphoribosyltransferase from Bordetella bronchiseptica (strain ATCC BAA-588 / NCTC 13252 / RB50) (Alcaligenes bronchisepticus).